A 1053-amino-acid chain; its full sequence is Ubiquitin-like modifier-activating enzyme 6 (1053 aa).

M1 bears the N-acetylmethionine mark. Position 46 (R46) interacts with ATP. Position 54 is a phosphothreonine (T54). ATP contacts are provided by A470 and D497. Mg(2+) contacts are provided by D499 and E502. The ATP site is built by N505, R508, Q509, and K521. K544 is subject to N6-acetyllysine. V545 is a binding site for ATP. Position 569 (D569) interacts with Mg(2+). N570 serves as a coordination point for ATP. C625 (glycyl thioester intermediate) is an active-site residue. The residue at position 729 (K729) is an N6-acetyllysine. Residue S737 is modified to Phosphoserine.

The protein belongs to the ubiquitin-activating E1 family. Forms a thioester with UBD in cells stimulated with tumor necrosis factor-alpha (TNFa) and interferon-gamma (IFNg).

It catalyses the reaction ATP + ubiquitin + [E1 ubiquitin-activating enzyme]-L-cysteine = AMP + diphosphate + S-ubiquitinyl-[E1 ubiquitin-activating enzyme]-L-cysteine.. The protein operates within protein modification; protein ubiquitination. In terms of biological role, activates ubiquitin by first adenylating its C-terminal glycine residue with ATP, and thereafter linking this residue to the side chain of a cysteine residue in E1, yielding a ubiquitin-E1 thioester and free AMP. Specific for ubiquitin, does not activate ubiquitin-like peptides. Also activates UBD/FAT10 conjugation via adenylation of its C-terminal glycine. Differs from UBE1 in its specificity for substrate E2 charging. Does not charge cell cycle E2s, such as CDC34. Essential for embryonic development. The polypeptide is Ubiquitin-like modifier-activating enzyme 6 (Uba6) (Mus musculus (Mouse)).